A 252-amino-acid polypeptide reads, in one-letter code: Proteasome subunit alpha type-7-1B (252 aa).

It belongs to the peptidase T1A family. In terms of assembly, the 26S proteasome consists of a 20S proteasome core and two 19S regulatory subunits. The 20S proteasome core is composed of 28 subunits that are arranged in four stacked rings, resulting in a barrel-shaped structure. The two end rings are each formed by seven alpha subunits, and the two central rings are each formed by seven beta subunits. The catalytic chamber with the active sites is on the inside of the barrel. As to expression, testis specific.

Its subcellular location is the cytoplasm. It localises to the nucleus. Its function is as follows. The proteasome is a multicatalytic proteinase complex which is characterized by its ability to cleave peptides with Arg, Phe, Tyr, Leu, and Glu adjacent to the leaving group at neutral or slightly basic pH. The proteasome has an ATP-dependent proteolytic activity. The sequence is that of Proteasome subunit alpha type-7-1B (Prosalpha4T2) from Drosophila melanogaster (Fruit fly).